Here is a 571-residue protein sequence, read N- to C-terminus: Potassium-transporting ATPase potassium-binding subunit (571 aa).

The next 11 helical transmembrane spans lie at 5 to 25 (GWTQITLYGAVVLALVKPLGW), 64 to 84 (LGYAGALLLFHVFGFLVLYAI), 136 to 156 (GLTHQNFLSAATGIAVAVALI), 178 to 198 (ILYVLLPICILYTLFLVWQGI), 254 to 274 (LSNFVQMVSIFAIGAALTNVF), 285 to 305 (WAILAAMGALFLAGVAVAYWA), 330 to 350 (FDIAASALFAVVTTAASCGAV), 357 to 379 (FTALGGMIPLVNMQLGEVIIGGV), 421 to 441 (MLGILCLPLMMLGFTALATVL), 488 to 508 (LAVGMLVGRFFVIIPALAIAG), and 527 to 547 (GALFVGLLVGVILIIGGLTFF).

It belongs to the KdpA family. In terms of assembly, the system is composed of three essential subunits: KdpA, KdpB and KdpC.

Its subcellular location is the cell inner membrane. Functionally, part of the high-affinity ATP-driven potassium transport (or Kdp) system, which catalyzes the hydrolysis of ATP coupled with the electrogenic transport of potassium into the cytoplasm. This subunit binds the periplasmic potassium ions and delivers the ions to the membrane domain of KdpB through an intramembrane tunnel. In Methylobacterium nodulans (strain LMG 21967 / CNCM I-2342 / ORS 2060), this protein is Potassium-transporting ATPase potassium-binding subunit.